Reading from the N-terminus, the 290-residue chain is MLKDIFTKKKKYASVPSDQAKHDVPEGIMTKCPKCKKIMLTKELDKNMRVCMNCDYHFPMNAKQRIESLMDEQSFEEFNQGMLSENPLGFPGYLEKLEKDREKTSLNEAVVTGKGTIGGHPAVVAVMDSSFRMGSMGSVVGEKITLAIEKAKADKVPFIIFTASGGARMQEGVLSLMQMAKTSSALKLFSEEQGLIISVMTHPTTGGVSASFASLGDYNFAEPGALIGFAGRRIIEQTIGEKLPEDFQTAEFLLKHGQLDAVIHRDDMKKTLENLLDMHQTGGDIEWLQD.

Residues 28–290 form the CoA carboxyltransferase N-terminal domain; sequence IMTKCPKCKK…TGGDIEWLQD (263 aa). Zn(2+)-binding residues include Cys-32, Cys-35, Cys-51, and Cys-54. A C4-type zinc finger spans residues 32 to 54; it reads CPKCKKIMLTKELDKNMRVCMNC.

The protein belongs to the AccD/PCCB family. As to quaternary structure, acetyl-CoA carboxylase is a heterohexamer composed of biotin carboxyl carrier protein (AccB), biotin carboxylase (AccC) and two subunits each of ACCase subunit alpha (AccA) and ACCase subunit beta (AccD). Requires Zn(2+) as cofactor.

Its subcellular location is the cytoplasm. It catalyses the reaction N(6)-carboxybiotinyl-L-lysyl-[protein] + acetyl-CoA = N(6)-biotinyl-L-lysyl-[protein] + malonyl-CoA. The protein operates within lipid metabolism; malonyl-CoA biosynthesis; malonyl-CoA from acetyl-CoA: step 1/1. With respect to regulation, inhibited by pyrrolidine dione antibiotics moiramide B (CPD1) and CPD2. Functionally, component of the acetyl coenzyme A carboxylase (ACC) complex. Biotin carboxylase (BC) catalyzes the carboxylation of biotin on its carrier protein (BCCP) and then the CO(2) group is transferred by the transcarboxylase to acetyl-CoA to form malonyl-CoA. The chain is Acetyl-coenzyme A carboxylase carboxyl transferase subunit beta from Bacillus subtilis (strain 168).